The sequence spans 242 residues: tRNA (guanine-N(1)-)-methyltransferase (242 aa).

Residues Gly113 and 133–138 each bind S-adenosyl-L-methionine; that span reads IGDYVL.

Belongs to the RNA methyltransferase TrmD family. In terms of assembly, homodimer.

The protein resides in the cytoplasm. The enzyme catalyses guanosine(37) in tRNA + S-adenosyl-L-methionine = N(1)-methylguanosine(37) in tRNA + S-adenosyl-L-homocysteine + H(+). In terms of biological role, specifically methylates guanosine-37 in various tRNAs. The chain is tRNA (guanine-N(1)-)-methyltransferase from Shewanella sediminis (strain HAW-EB3).